The primary structure comprises 241 residues: Tetraspanin-1 (241 aa).

The next 3 membrane-spanning stretches (helical) occupy residues 12-32 (ILFN…GIWV), 53-73 (FVNV…LGFL), and 89-109 (FFSI…VALV). The N-linked (GlcNAc...) asparagine glycan is linked to Asn154. A helical membrane pass occupies residues 212-232 (AVTVGGVAVGVAALELAAMVV).

The protein belongs to the tetraspanin (TM4SF) family. As to quaternary structure, interacts with SLC19A2. Interacts with NTRK1/TRKA.

It is found in the cell membrane. Its subcellular location is the lysosome membrane. Its function is as follows. Structural component of specialized membrane microdomains known as tetraspanin-enriched microdomains (TERMs), which act as platforms for receptor clustering and signaling. Participates thereby in diverse biological functions such as cell signal transduction, adhesion, migration and protein trafficking. Regulates neuronal differentiation in response to NGF by facilitating NGF-mediated activation of NTRK1/TRKA receptor tyrosine kinase and subsequent downstream signaling pathways. Plays a role in the inhibition of TNFalpha-induced apoptosis. Mechanistically, inhibits the NF-kappa-B signaling pathway by blocking phosphorylation of CHUK. Also promotes the stability of the thiamine transporter 1/SLC19A2 in intestinal epithelial cells leading to an increase of thiamine uptake process. The polypeptide is Tetraspanin-1 (Tspan1) (Rattus norvegicus (Rat)).